A 125-amino-acid polypeptide reads, in one-letter code: Snaclec alboaggregin-A subunit beta (125 aa).

Residues 1-125 (GFDCPFGWSS…TRYPVCKFXG (125 aa)) form the C-type lectin domain. Cystine bridges form between C4–C15, C32–C121, and C98–C113.

The protein belongs to the snaclec family. In terms of assembly, heterotetramer of the subunits alpha, alpha', beta and beta'; disulfide-linked. Expressed by the venom gland.

Its subcellular location is the secreted. Its function is as follows. Potent platelet activator that aggregates platelets via both GPIbalpha (GP1BA) and GPVI (GP6). Induces a tyrosine phosphorylation profile in platelets that resembles this produced by collagen, involving the time dependent tyrosine phosphorylation of Fc receptor gamma chain (FCGR1A), phospholipase Cgamma2 (PLCG2), and LAT. The chain is Snaclec alboaggregin-A subunit beta from Trimeresurus albolabris (White-lipped pit viper).